Here is a 152-residue protein sequence, read N- to C-terminus: Small ribosomal subunit protein uS15 (152 aa).

A compositionally biased stretch (basic residues) spans 1–16 (MARIHARRRGKSGSKR). Residues 1 to 21 (MARIHARRRGKSGSKRIYRDS) form a disordered region.

The protein belongs to the universal ribosomal protein uS15 family. Part of the 30S ribosomal subunit.

This chain is Small ribosomal subunit protein uS15, found in Archaeoglobus fulgidus (strain ATCC 49558 / DSM 4304 / JCM 9628 / NBRC 100126 / VC-16).